The primary structure comprises 209 residues: Ribonuclease HII (209 aa).

Residues 18–209 (GLVAGVDEVG…FKPVKALLER (192 aa)) form the RNase H type-2 domain. A divalent metal cation-binding residues include aspartate 24, glutamate 25, and aspartate 116.

It belongs to the RNase HII family. It depends on Mn(2+) as a cofactor. Mg(2+) serves as cofactor.

It is found in the cytoplasm. The catalysed reaction is Endonucleolytic cleavage to 5'-phosphomonoester.. Its function is as follows. Endonuclease that specifically degrades the RNA of RNA-DNA hybrids. The chain is Ribonuclease HII from Shewanella sp. (strain MR-7).